We begin with the raw amino-acid sequence, 189 residues long: MKELKILVVNNYGQFCHLIHRAVRDLDMDTKIIPNTTPIEDILAEEPDGLILSGGPEMDRAGLCFDYVREIDLPILGICLGHQAIALAYGGHVHSGKKGGYAEVEVEVLEEDDILRGLGPKATVWASHADEVAILPEGFIHLARSDICEIEAMRHPTKPIYGVQWHPEVSHTEKGEELLTNFLEICEKY.

Residues 5-189 (KILVVNNYGQ…TNFLEICEKY (185 aa)) form the Glutamine amidotransferase type-1 domain. The active-site Nucleophile is C79. Catalysis depends on residues H166 and E168.

In terms of assembly, heterodimer composed of a glutamine amidotransferase subunit (A) and a GMP-binding subunit (B).

The catalysed reaction is XMP + L-glutamine + ATP + H2O = GMP + L-glutamate + AMP + diphosphate + 2 H(+). It participates in purine metabolism; GMP biosynthesis; GMP from XMP (L-Gln route): step 1/1. Its function is as follows. Catalyzes the synthesis of GMP from XMP. The protein is GMP synthase [glutamine-hydrolyzing] subunit A of Methanosarcina barkeri (strain Fusaro / DSM 804).